Consider the following 64-residue polypeptide: MKQKTHKGTAKRIKVTGSGKLRREQANRRHLLEGKPSKRTRRLKGTEDVAKADTKRVKRLLGRA.

Residues 1-14 (MKQKTHKGTAKRIK) are compositionally biased toward basic residues. Positions 1 to 48 (MKQKTHKGTAKRIKVTGSGKLRREQANRRHLLEGKPSKRTRRLKGTED) are disordered. Over residues 21 to 36 (LRREQANRRHLLEGKP) the composition is skewed to basic and acidic residues.

It belongs to the bacterial ribosomal protein bL35 family.

This is Large ribosomal subunit protein bL35 from Corynebacterium aurimucosum (strain ATCC 700975 / DSM 44827 / CIP 107346 / CN-1) (Corynebacterium nigricans).